The primary structure comprises 297 residues: MRSWNSLFCLNSSRPPGHIVYPKHQAGHTGKQADHLGSQAFYPGRQHDYLVPPAGTAGIPVQNQPGRPEGVPWMPAPPPPLNCPPGLEYLSQIDMILIHQQIELLEVLFSFESSNMYEIKNSFGQRIYFAAEDTNFCIRNCCGRSRPFTLRITDNVGREVITLERPLRCNCCCCPCCLQEIEIQAPPGVPVGYVTQTWHPCLTKFTIKNQKREDVLKISGPCIVCSCIAGVDFEITSLDEQIVVGRISKHWSGFLREAFTDADNFGIQFPRDLDVKMKAVMIGACFLIDYMFFERTR.

Residues 1–72 (MRSWNSLFCL…NQPGRPEGVP (72 aa)) form a proline-rich domain (PRD) region. At 1-276 (MRSWNSLFCL…IQFPRDLDVK (276 aa)) the chain is on the cytoplasmic side. Thr-149 is modified (phosphothreonine; by PKC). S-palmitoyl cysteine attachment occurs at residues Cys-172, Cys-173, Cys-174, Cys-176, and Cys-177. Residues 277–293 (MKAVMIGACFLIDYMFF) form a helical membrane-spanning segment. At 294-297 (ERTR) the chain is on the extracellular side.

This sequence belongs to the phospholipid scramblase family. Ca(2+) serves as cofactor. As to expression, expression of isoform 1 seems restricted to testis.

Its subcellular location is the membrane. It localises to the nucleus. It carries out the reaction a 1,2-diacyl-sn-glycero-3-phosphocholine(in) = a 1,2-diacyl-sn-glycero-3-phosphocholine(out). In terms of biological role, may catalyze calcium-induced ATP-independent rapid bidirectional and non-specific movement of phospholipids (lipid scrambling or lipid flip-flop) between the inner and outer leaflet of the plasma membrane. Has no phospholipid scramblase activity, due to the lack of a N-terminal proline-rich domain. The protein is Phospholipid scramblase 2 of Homo sapiens (Human).